The following is a 398-amino-acid chain: Bifunctional enzyme IspD/IspF (398 aa).

The tract at residues 1–234 is 2-C-methyl-D-erythritol 4-phosphate cytidylyltransferase; that stretch reads MPNPPRTAAI…SRLTALLGDI (234 aa). The interval 235–398 is 2-C-methyl-D-erythritol 2,4-cyclodiphosphate synthase; sequence RTGTGYDVHA…LPWGAEGLAG (164 aa). Positions 241 and 243 each coordinate a divalent metal cation. Residues 241–243 and 267–268 contribute to the 4-CDP-2-C-methyl-D-erythritol 2-phosphate site; these read DVH and HS. H275 serves as a coordination point for a divalent metal cation. Residues 289-291, 365-368, F372, and R375 contribute to the 4-CDP-2-C-methyl-D-erythritol 2-phosphate site; these read DIG and TTSE.

It in the N-terminal section; belongs to the IspD/TarI cytidylyltransferase family. IspD subfamily. This sequence in the C-terminal section; belongs to the IspF family. A divalent metal cation serves as cofactor.

The catalysed reaction is 2-C-methyl-D-erythritol 4-phosphate + CTP + H(+) = 4-CDP-2-C-methyl-D-erythritol + diphosphate. It catalyses the reaction 4-CDP-2-C-methyl-D-erythritol 2-phosphate = 2-C-methyl-D-erythritol 2,4-cyclic diphosphate + CMP. The protein operates within isoprenoid biosynthesis; isopentenyl diphosphate biosynthesis via DXP pathway; isopentenyl diphosphate from 1-deoxy-D-xylulose 5-phosphate: step 2/6. It participates in isoprenoid biosynthesis; isopentenyl diphosphate biosynthesis via DXP pathway; isopentenyl diphosphate from 1-deoxy-D-xylulose 5-phosphate: step 4/6. Bifunctional enzyme that catalyzes the formation of 4-diphosphocytidyl-2-C-methyl-D-erythritol from CTP and 2-C-methyl-D-erythritol 4-phosphate (MEP) (IspD), and catalyzes the conversion of 4-diphosphocytidyl-2-C-methyl-D-erythritol 2-phosphate (CDP-ME2P) to 2-C-methyl-D-erythritol 2,4-cyclodiphosphate (ME-CPP) with a corresponding release of cytidine 5-monophosphate (CMP) (IspF). The sequence is that of Bifunctional enzyme IspD/IspF from Rhodopseudomonas palustris (strain BisB5).